The primary structure comprises 80 residues: Exodeoxyribonuclease 7 small subunit (80 aa).

This sequence belongs to the XseB family. Heterooligomer composed of large and small subunits.

The protein resides in the cytoplasm. The enzyme catalyses Exonucleolytic cleavage in either 5'- to 3'- or 3'- to 5'-direction to yield nucleoside 5'-phosphates.. Functionally, bidirectionally degrades single-stranded DNA into large acid-insoluble oligonucleotides, which are then degraded further into small acid-soluble oligonucleotides. In Vibrio vulnificus (strain CMCP6), this protein is Exodeoxyribonuclease 7 small subunit.